Reading from the N-terminus, the 315-residue chain is Taste receptor type 2 member 129 (315 aa).

The Extracellular portion of the chain corresponds to 1–9 (MDGIIQIIS). Residues 10–30 (AFIVIIEIIIGWFGNGFIVLV) traverse the membrane as a helical segment. Topologically, residues 31 to 46 (NCMHWIKRRRISTVNQ) are cytoplasmic. A helical transmembrane segment spans residues 47 to 67 (ILTALAFSRIYLLLTVFTVIL). At 68–101 (ASVQYSNILVTRREVKVIIFHLITSNHFSMWLAA) the chain is on the extracellular side. The helical transmembrane segment at 102 to 122 (CLGLFYFLKIANFSNFIFVFL) threads the bilayer. At 123–128 (KKRVNK) the chain is on the cytoplasmic side. The helical transmembrane segment at 129 to 149 (VVSGTLLMSLVFLFLNTLLIN) threads the bilayer. The Extracellular portion of the chain corresponds to 150–185 (SYIDAQIDDYRGYLLYDFTSNITVSFYRVILVINNC). The N-linked (GlcNAc...) asparagine glycan is linked to Asn170. Residues 186–206 (IFTSIPFALSQSTFLMLIFSL) traverse the membrane as a helical segment. The Cytoplasmic portion of the chain corresponds to 207–233 (WRHYKKMQQHAQRCRDTLTNAHIKVLQ). A helical transmembrane segment spans residues 234–254 (TMIMYVLLSAIFFLFLSMQIW). Residues 255 to 266 (RNKLMENILFIR) are Extracellular-facing. Residues 267–287 (FCETVAAVFPSGHSCVLIWGD) form a helical membrane-spanning segment. Topologically, residues 288 to 315 (TNLRQTFLSVLWWLKHRFTLWVPKLYCR) are cytoplasmic.

It belongs to the G-protein coupled receptor T2R family.

Its subcellular location is the membrane. Its function is as follows. Putative taste receptor which may play a role in the perception of bitterness. This Rattus norvegicus (Rat) protein is Taste receptor type 2 member 129.